The sequence spans 53 residues: Rubredoxin 3 (53 aa).

The Rubredoxin-like domain maps to 1-53; the sequence is MQKWVCVPCGYEYDPADGDPENGIEPGTAFEDLPEDWVCPVCGVDKSFFEPVS. 4 residues coordinate Fe cation: cysteine 6, cysteine 9, cysteine 39, and cysteine 42.

The protein belongs to the rubredoxin family. In terms of assembly, monomer. Requires Fe(3+) as cofactor.

Its function is as follows. Functions as an electron acceptor for pyruvate ferredoxin oxidoreductase (PFOR). This is Rubredoxin 3 (rub3) from Chlorobaculum tepidum (strain ATCC 49652 / DSM 12025 / NBRC 103806 / TLS) (Chlorobium tepidum).